Reading from the N-terminus, the 1673-residue chain is Leucine-rich repeat- and IQ domain-containing protein 1 (1673 aa).

Disordered stretches follow at residues 22 to 48 (ISIS…SDTD) and 189 to 208 (LEEK…KRTF). Residues 34 to 59 (NDSVSDTQSDSSDTDLLELPESVLHY) form an LRR 1 repeat. Residues 216–239 (QCWMRQFEVEKKHLEDLQKQDQDK) form an LRR 2 repeat. One can recognise an IQ 1 domain in the interval 291–320 (RYDAAVKIQATYRASVTYRKYSPIIKEQME). Residues 324-374 (RRAQELKEKEAKIRQKEEEKRRRLEEEQRVEEEKKKKMLEERRRREREYEE) are disordered. Residues 326–374 (AQELKEKEAKIRQKEEEKRRRLEEEQRVEEEKKKKMLEERRRREREYEE) show a composition bias toward basic and acidic residues. One copy of the LRR 3 repeat lies at 491–516 (LPKLKINENLSKNQCSEQPSDQEFNA). Disordered stretches follow at residues 544-658 (ESDT…EEIP) and 679-702 (EGEA…GSHS). Basic and acidic residues-rich tracts occupy residues 549–567 (TEEH…ETEK) and 588–602 (EETR…EIKE). Residues 603–629 (MTQQGGPSDENNSSPISMQKSLPSLTP) show a composition bias toward polar residues. Residues 641–665 (LEEDQETDLKSERIEEIPEEGVLSC) form an LRR 4 repeat. Over residues 647–656 (TDLKSERIEE) the composition is skewed to basic and acidic residues. 11 LRR repeats span residues 830–852 (CSNL…LSHC), 853–873 (TRLK…CENL), 874–894 (ENLS…GFDG), 895–919 (CTNL…SLKY), 921–939 (QELT…LCEA), 940–961 (PTIV…IGNC), 962–983 (GLLQ…LRNH), 984–1005 (VLLR…LSSC), 1007–1029 (LPLL…LFHL), 1030–1054 (VSLE…WFNA), and 1067–1090 (PVLQ…VLNG). Disordered regions lie at residues 1163–1230 (AHEQ…HCEE) and 1308–1330 (PTTT…EERR). Polar residues-rich tracts occupy residues 1168 to 1226 (DVNT…PSTS) and 1308 to 1325 (PTTT…QTTS). IQ domains are found at residues 1280–1309 (PTKA…MHPT) and 1340–1369 (REKA…AIKD). The stretch at 1378–1405 (EIDLEDFEFDEDALEKDWPALDSTGFPS) is one LRR 16 repeat.

The sequence is that of Leucine-rich repeat- and IQ domain-containing protein 1 (Lrriq1) from Mus musculus (Mouse).